Here is a 431-residue protein sequence, read N- to C-terminus: Serine--tRNA ligase (431 aa).

Residue Thr238–Glu240 participates in L-serine binding. An ATP-binding site is contributed by Arg269–Glu271. An L-serine-binding site is contributed by Glu292. Glu356–Ser359 is a binding site for ATP. Ser392 contacts L-serine.

Belongs to the class-II aminoacyl-tRNA synthetase family. Type-1 seryl-tRNA synthetase subfamily. Homodimer. The tRNA molecule binds across the dimer.

It is found in the cytoplasm. The catalysed reaction is tRNA(Ser) + L-serine + ATP = L-seryl-tRNA(Ser) + AMP + diphosphate + H(+). It carries out the reaction tRNA(Sec) + L-serine + ATP = L-seryl-tRNA(Sec) + AMP + diphosphate + H(+). It participates in aminoacyl-tRNA biosynthesis; selenocysteinyl-tRNA(Sec) biosynthesis; L-seryl-tRNA(Sec) from L-serine and tRNA(Sec): step 1/1. Functionally, catalyzes the attachment of serine to tRNA(Ser). Is also able to aminoacylate tRNA(Sec) with serine, to form the misacylated tRNA L-seryl-tRNA(Sec), which will be further converted into selenocysteinyl-tRNA(Sec). This Pectobacterium carotovorum subsp. carotovorum (strain PC1) protein is Serine--tRNA ligase.